A 227-amino-acid polypeptide reads, in one-letter code: Class I hydrophobin 4 (227 aa).

The N-terminal stretch at 1–18 (MQFTTFALLAVAAATASA) is a signal peptide. 4 disulfide bridges follow: C159–C207, C167–C200, C168–C186, and C208–C222. N190 and N219 each carry an N-linked (GlcNAc...) asparagine glycan.

This sequence belongs to the fungal hydrophobin family. As to quaternary structure, self-assembles to form functional amyloid fibrils called rodlets. Self-assembly into fibrillar rodlets occurs spontaneously at hydrophobic:hydrophilic interfaces and the rodlets further associate laterally to form amphipathic monolayers. In terms of tissue distribution, expressed in conidia and aerial hyphae.

The protein localises to the secreted. Its subcellular location is the cell wall. Its function is as follows. Aerial growth, conidiation, and dispersal of filamentous fungi in the environment rely upon a capability of their secreting small amphipathic proteins called hydrophobins (HPBs) with low sequence identity. Class I can self-assemble into an outermost layer of rodlet bundles on aerial cell surfaces, conferring cellular hydrophobicity that supports fungal growth, development and dispersal; whereas Class II form highly ordered films at water-air interfaces through intermolecular interactions but contribute nothing to the rodlet structure. Hcf-4 is a class I hydrophobin that is involved in the development and germination of conidia. The protein is Class I hydrophobin 4 of Passalora fulva (Tomato leaf mold).